The primary structure comprises 471 residues: Sulfate adenylyltransferase subunit 1 (471 aa).

The region spanning 22 to 239 (KDMLRFLTCG…NIEIGEDDNL (218 aa)) is the tr-type G domain. A G1 region spans residues 31-38 (GSVDDGKS). A GTP-binding site is contributed by 31–38 (GSVDDGKS). The G2 stretch occupies residues 89–93 (GITID). The tract at residues 110–113 (DTPG) is G3. Residues 110–114 (DTPGH) and 165–168 (NKMD) contribute to the GTP site. The segment at 165–168 (NKMD) is G4. The interval 202–204 (SAL) is G5.

The protein belongs to the TRAFAC class translation factor GTPase superfamily. Classic translation factor GTPase family. CysN/NodQ subfamily. In terms of assembly, heterodimer composed of CysD, the smaller subunit, and CysN.

It catalyses the reaction sulfate + ATP + H(+) = adenosine 5'-phosphosulfate + diphosphate. It participates in sulfur metabolism; hydrogen sulfide biosynthesis; sulfite from sulfate: step 1/3. In terms of biological role, with CysD forms the ATP sulfurylase (ATPS) that catalyzes the adenylation of sulfate producing adenosine 5'-phosphosulfate (APS) and diphosphate, the first enzymatic step in sulfur assimilation pathway. APS synthesis involves the formation of a high-energy phosphoric-sulfuric acid anhydride bond driven by GTP hydrolysis by CysN coupled to ATP hydrolysis by CysD. In Alteromonas mediterranea (strain DSM 17117 / CIP 110805 / LMG 28347 / Deep ecotype), this protein is Sulfate adenylyltransferase subunit 1.